The chain runs to 366 residues: MTISLENTTVGQNPAGGPPTGKAPLDMEGLAWILFGASAFQYLNAACELNLFELLENKPGLTKPQIGAELGLADRANDILLLGATATGMLTVEDGRYQLATVLAELLKTDDWQRFKDTVGFEQYVCYEGQIDFTESLRSNSNVGLRRVRGSGRDLYHRLHENPQMEQAFYKYMRSWSELANQHLVEVLDLSGTSKLLDCGGGDAVNSIALAQANPHIEAGILEIPPTAPLTEKKIAEAGLSDRITVKPGDMHTDEFPTGYDTVMFAHQLVIWTPEENTALLRKAYNALPEGGRVIIFNSMSNDEGDGPVVAALDSVYFAALPAEGGMIYSWATYEESLTKAGFNPETFQRIDFPGWTPHGVIIATK.

Residues 1–12 show a composition bias toward polar residues; that stretch reads MTISLENTTVGQ. A disordered region spans residues 1 to 22; that stretch reads MTISLENTTVGQNPAGGPPTGK. Glu223 serves as a coordination point for S-adenosyl-L-methionine.

This sequence belongs to the class I-like SAM-binding methyltransferase superfamily. Cation-independent O-methyltransferase family.

The catalysed reaction is L-tyrosine + S-adenosyl-L-methionine = 3-methyl-L-tyrosine + S-adenosyl-L-homocysteine + H(+). Its pathway is antibiotic biosynthesis. In terms of biological role, C-methyltransferase that mediates the methylation of tyrosine into 3-methyl-L-tyrosine (3-Me-Tyr) in biosynthesis of saframycin A, a potent antitumor antibiotic that belongs to the tetrahydroisoquinoline family. Involved in biosynthesis of 3-hydroxy-5-methyl-O-methyltyrosine (3-OH-5-Me-OMe-Tyr), a core structure of saframycin A. This Streptomyces lavendulae protein is L-tyrosine C(3)-methyltransferase.